The chain runs to 614 residues: Lamin-2 (614 aa).

A compositionally biased stretch (basic residues) spans 1-10; that stretch reads MSAQVSKKRG. The interval 1–51 is disordered; that stretch reads MSAQVSKKRGGSNPPKTGQHAASSTTSRTESSATSQTIYERQEVETRTQRT. The segment at 1–76 is head; the sequence is MSAQVSKKRG…GTAGLAGSPL (76 aa). Over residues 21-37 the composition is skewed to low complexity; that stretch reads AASSTTSRTESSATSQT. A coil 1A region spans residues 77–117; the sequence is SRHQEKEEFKLLNNRFANYIDTIRAQQEEISVLRRKVETVS. Residues 81–433 enclose the IF rod domain; the sequence is EKEEFKLLNN…ALLRTEEERL (353 aa). Positions 118–128 are linker 1; that stretch reads SKEVVENQKIK. Residues 129–268 are coil 1B; it reads ERYNLEIANL…EEIVSLRNQR (140 aa). A linker 2 region spans residues 269-286; that stretch reads RTEITEVETRMGEEYQSK. Residues 287-426 form a coil 2 region; that stretch reads IVEQLNDLRA…AELATYNALL (140 aa). The tract at residues 427–611 is tail; that stretch reads RTEEERLNMK…ADSSDHQKNC (185 aa). The interval 433-454 is disordered; sequence LNMKSPPFPSTPDSQRRGTKRR. The short motif at 449–458 is the Nuclear localization signal element; sequence RGTKRRIADS. The LTD domain occupies 462-581; sequence TRFRNEASAT…VARREMTQSS (120 aa). Cys611 carries the S-farnesyl cysteine lipid modification. A propeptide spans 612-614 (removed in mature form); the sequence is VIM.

The protein belongs to the intermediate filament family.

It is found in the nucleus inner membrane. Intermediate filament (IF) protein, component of the nuclear lamina, a fibrous layer on the nucleoplasmic side of the inner nuclear membrane, which is thought to provide a framework for the nuclear envelope. The protein is Lamin-2 of Hypsibius exemplaris (Freshwater tardigrade).